The following is a 495-amino-acid chain: Glycerol kinase (495 aa).

Threonine 14 is a binding site for ADP. Residues threonine 14, threonine 15, and serine 16 each contribute to the ATP site. Threonine 14 contacts sn-glycerol 3-phosphate. Arginine 18 contributes to the ADP binding site. Residues arginine 84, glutamate 85, tyrosine 136, and aspartate 246 each coordinate sn-glycerol 3-phosphate. Glycerol-binding residues include arginine 84, glutamate 85, tyrosine 136, aspartate 246, and glutamine 247. ADP is bound by residues threonine 268 and glycine 312. Positions 268, 312, 316, and 413 each coordinate ATP. Residues glycine 413 and asparagine 417 each contribute to the ADP site.

This sequence belongs to the FGGY kinase family.

It catalyses the reaction glycerol + ATP = sn-glycerol 3-phosphate + ADP + H(+). It participates in polyol metabolism; glycerol degradation via glycerol kinase pathway; sn-glycerol 3-phosphate from glycerol: step 1/1. With respect to regulation, inhibited by fructose 1,6-bisphosphate (FBP). Functionally, key enzyme in the regulation of glycerol uptake and metabolism. Catalyzes the phosphorylation of glycerol to yield sn-glycerol 3-phosphate. This chain is Glycerol kinase, found in Bdellovibrio bacteriovorus (strain ATCC 15356 / DSM 50701 / NCIMB 9529 / HD100).